We begin with the raw amino-acid sequence, 465 residues long: Iron transporter FTH1 (465 aa).

The Vacuolar segment spans residues 1–11 (MAFEDYFSFQI). The chain crosses the membrane as a helical span at residues 12–32 (FFIFLRESLEIVVIVSILLTI). Residues 33-135 (VKQGLSVEDD…LYQKLKIQIL (103 aa)) are Cytoplasmic-facing. The segment at 44-66 (PFEGSSSSAGLPSPNTNTNADST) is disordered. Residues 46–66 (EGSSSSAGLPSPNTNTNADST) show a composition bias toward polar residues. The chain crosses the membrane as a helical span at residues 136–156 (AGGAFGLLLCMLIGGAFVSIF). Over 157-170 (YHIGTDLWTLSEHY) the chain is Vacuolar. The helical transmembrane segment at 171–191 (YEGVLSLVASVIISVMGLFFL) threads the bilayer. Residues 192–289 (RMGKLREKFR…FFFRYSSSLS (98 aa)) are Cytoplasmic-facing. Residues 290–310 (LKICLVVATCFLYLIAAGLFS) traverse the membrane as a helical segment. Topologically, residues 311–358 (KGVWQLELQDYVNKCNGQDMSEVGNGPGSYDISRSVWHVNCCNGEKDG) are vacuolar. The helical transmembrane segment at 359 to 379 (GWMIFTAIFGWTNSATVGSVI) threads the bilayer. At 380–465 (SYNAYWLVLI…LIIDSSGSAN (86 aa)) the chain is on the cytoplasmic side. The tract at residues 433-465 (TSELNSSTSEPDSQRRSKDSSVPLIIDSSGSAN) is disordered. Phosphoserine is present on residues S449 and S453.

This sequence belongs to the oxidase-dependent Fe transporter (OFeT) (TC 9.A.10.1) family. In terms of assembly, interacts with FET5.

It is found in the vacuole membrane. Functionally, high affinity iron transporter probably involved in transport of intravacuolar stores of iron. The polypeptide is Iron transporter FTH1 (FTH1) (Saccharomyces cerevisiae (strain ATCC 204508 / S288c) (Baker's yeast)).